A 248-amino-acid chain; its full sequence is 14-3-3 protein zeta (248 aa).

Belongs to the 14-3-3 family. In terms of assembly, homodimer; homodimerization is not essential for modulating the activity of Slo. Interacts with phosphorylated Slob; the interaction with Slob mediates an indirect interaction with Slo. Interacts with phosphorylated yki. Interacts with hemo; this represses 14-3-3zeta activity which prevents the 14-3-3zeta-mediated activation of phosphoinositide 3-kinase Pi3K68D. This, in turn, inhibits the Pi3K68D-mediated conversion of phosphatidylinositol to phosphatidylinositol-3-phosphate and prevents progression of early endosomes through the maturation process which regulates subsequent steps of phagocytic processing. Interacts with REPTOR (when phosphorylated), this interaction may assist the cytoplasmic retention of REPTOR. Predominantly expressed in the ventral nerve cord of the embryo, and in the neural tissues of the head. Also found in the region posterior to the morphogenetic furrow of the eye imaginal disk where cells differentiate as photoreceptors.

It is found in the cytoplasm. It localises to the early endosome. Required in Raf-dependent cell proliferation and photoreceptor differentiation during eye development. Acts upstream of Raf and downstream of Ras, and is essential for viability. Acts as a negative regulator of the slo calcium channel via its interaction with slo-binding protein slob. Inhibits yki activity by restricting its nuclear localization. Binds to and promotes the activity of phosphoinositide 3-kinase Pi3K68D which converts phosphatidylinositol to phosphatidylinositol-3-phosphate and promotes maturation of early endosomes. This chain is 14-3-3 protein zeta (14-3-3zeta), found in Drosophila melanogaster (Fruit fly).